The primary structure comprises 189 residues: ATP-dependent protease subunit HslV (189 aa).

The active site involves threonine 12. Residues alanine 172, cysteine 175, and threonine 178 each contribute to the Na(+) site.

It belongs to the peptidase T1B family. HslV subfamily. A double ring-shaped homohexamer of HslV is capped on each side by a ring-shaped HslU homohexamer. The assembly of the HslU/HslV complex is dependent on binding of ATP.

It localises to the cytoplasm. It carries out the reaction ATP-dependent cleavage of peptide bonds with broad specificity.. Allosterically activated by HslU binding. Its function is as follows. Protease subunit of a proteasome-like degradation complex believed to be a general protein degrading machinery. The polypeptide is ATP-dependent protease subunit HslV (Anaplasma phagocytophilum (strain HZ)).